We begin with the raw amino-acid sequence, 463 residues long: Sugar transporter ERD6-like 7 (463 aa).

The next 12 helical transmembrane spans lie at Trp-26–Ala-46, Leu-69–Ala-89, Ala-103–Leu-123, Leu-126–Ile-146, Thr-157–Val-177, Val-181–Pro-201, Val-264–Phe-284, Leu-299–Val-319, Leu-327–Tyr-347, Ala-357–Met-377, Val-396–Phe-416, and Gly-426–Val-446.

It belongs to the major facilitator superfamily. Sugar transporter (TC 2.A.1.1) family.

Its subcellular location is the membrane. In terms of biological role, sugar transporter. In Arabidopsis thaliana (Mouse-ear cress), this protein is Sugar transporter ERD6-like 7.